A 178-amino-acid polypeptide reads, in one-letter code: Large ribosomal subunit protein uL6 (178 aa).

It belongs to the universal ribosomal protein uL6 family. In terms of assembly, part of the 50S ribosomal subunit.

This protein binds to the 23S rRNA, and is important in its secondary structure. It is located near the subunit interface in the base of the L7/L12 stalk, and near the tRNA binding site of the peptidyltransferase center. The sequence is that of Large ribosomal subunit protein uL6 from Bacillus licheniformis (strain ATCC 14580 / DSM 13 / JCM 2505 / CCUG 7422 / NBRC 12200 / NCIMB 9375 / NCTC 10341 / NRRL NRS-1264 / Gibson 46).